The primary structure comprises 339 residues: tRNA-specific 2-thiouridylase MnmA (339 aa).

ATP is bound by residues 8–15 (AMSGGVDS) and M34. Residue C94 is the Nucleophile of the active site. An intrachain disulfide couples C94 to C188. G118 provides a ligand contact to ATP. The interval 136-138 (KDQ) is interaction with tRNA. Catalysis depends on C188, which acts as the Cysteine persulfide intermediate. Positions 290–291 (RY) are interaction with tRNA.

This sequence belongs to the MnmA/TRMU family.

The protein localises to the cytoplasm. It carries out the reaction S-sulfanyl-L-cysteinyl-[protein] + uridine(34) in tRNA + AH2 + ATP = 2-thiouridine(34) in tRNA + L-cysteinyl-[protein] + A + AMP + diphosphate + H(+). Catalyzes the 2-thiolation of uridine at the wobble position (U34) of tRNA, leading to the formation of s(2)U34. The protein is tRNA-specific 2-thiouridylase MnmA of Nitratiruptor sp. (strain SB155-2).